Consider the following 180-residue polypeptide: ATP-dependent protease subunit HslV (180 aa).

Residue T5 is part of the active site. Na(+)-binding residues include G165, C168, and T171.

It belongs to the peptidase T1B family. HslV subfamily. In terms of assembly, a double ring-shaped homohexamer of HslV is capped on each side by a ring-shaped HslU homohexamer. The assembly of the HslU/HslV complex is dependent on binding of ATP.

The protein resides in the cytoplasm. The catalysed reaction is ATP-dependent cleavage of peptide bonds with broad specificity.. Its activity is regulated as follows. Allosterically activated by HslU binding. In terms of biological role, protease subunit of a proteasome-like degradation complex believed to be a general protein degrading machinery. This chain is ATP-dependent protease subunit HslV, found in Helicobacter hepaticus (strain ATCC 51449 / 3B1).